A 104-amino-acid polypeptide reads, in one-letter code: Large ribosomal subunit protein uL24 (104 aa).

It belongs to the universal ribosomal protein uL24 family. As to quaternary structure, part of the 50S ribosomal subunit.

One of two assembly initiator proteins, it binds directly to the 5'-end of the 23S rRNA, where it nucleates assembly of the 50S subunit. In terms of biological role, one of the proteins that surrounds the polypeptide exit tunnel on the outside of the subunit. The sequence is that of Large ribosomal subunit protein uL24 from Bradyrhizobium diazoefficiens (strain JCM 10833 / BCRC 13528 / IAM 13628 / NBRC 14792 / USDA 110).